The primary structure comprises 282 residues: DNA-directed RNA polymerase III subunit RPC5 (282 aa).

Residues 1-70 form a disordered region; that stretch reads MSIDNKLFVT…TGEEEEDDPV (70 aa). 2 stretches are compositionally biased toward acidic residues: residues 10 to 35 and 60 to 70; these read TEEDEEDRTQDRADVEDESNDIDMIA and DTGEEEEDDPV. Threonine 61 is modified (phosphothreonine).

In terms of assembly, component of the RNA polymerase III (Pol III) complex consisting of 17 subunits. Interacts with RPC53/RPC4. RPC53/RPC4, RPC37/RPC5 and RPC11/RPC10 probably form a Pol III subcomplex.

It localises to the nucleus. Functionally, DNA-dependent RNA polymerase catalyzes the transcription of DNA into RNA using the four ribonucleoside triphosphates as substrates. Specific peripheric component of RNA polymerase III which synthesizes small RNAs, such as 5S rRNA and tRNAs. The RPC53/RPC4-RPC37/RPC5 subcomplex is required for terminator recognition and reinitiation. In Saccharomyces cerevisiae (strain ATCC 204508 / S288c) (Baker's yeast), this protein is DNA-directed RNA polymerase III subunit RPC5 (RPC37).